A 1086-amino-acid polypeptide reads, in one-letter code: NAD(P) transhydrogenase, mitochondrial (1086 aa).

Residues 1-43 (MANLLKTVVTGCSCPLLSNLGSCKGLRVKKDFLRTFYTHQELW) constitute a mitochondrion transit peptide. Over 44–474 (CKAPVKPGIP…TITPFRKTMS (431 aa)) the chain is Mitochondrial matrix. Lys-70 carries the post-translational modification N6-acetyllysine. Lys-117 is modified (N6-succinyllysine). An NAD(+)-binding site is contributed by 182–184 (RVT). Lys-224 carries the N6-succinyllysine modification. NAD(+) is bound by residues Val-237, 257-259 (DTR), and Gly-287. Lys-294 is modified (N6-succinyllysine). Positions 300 and 319 each coordinate NAD(+). An N6-succinyllysine modification is found at Lys-331. Lys-397 carries the N6-acetyllysine modification. 4 helical membrane passes run 475–493 (TASAYTAGLTGILGLGIAA), 501–521 (MVTTFGLAGIVGYHTVWGVTP), 527–546 (LMSVTNAISGLTAVGGLALM), and 558–578 (GLAALAAFISSVNIAGGFLVT). Residues 579–595 (QRMLDMFKRPTDPPEYN) are Mitochondrial matrix-facing. 5 helical membrane passes run 596 to 616 (YLYLLPAGTFVGGYLAALYSG), 622 to 642 (IMYLGSGLCCVGALAGLSTQG), 646 to 666 (LGNALGMIGVAGGLAATLGVL), 672 to 691 (LLAQMSGAMALGGTIGLTIA), and 702 to 722 (LVAAFHSLVGLAAVLTCIAEY). Topologically, residues 723–739 (IIEYPHFATDAAANLTK) are cytoplasmic. 5 helical membrane-spanning segments follow: residues 740–760 (IVAYLGTYIGGVTFSGSLIAY), 778–797 (HLLNAGLLAASVGGIIPFMV), 801–819 (FTTGITCLGSVSALSAVMG), 833–853 (VVITVLNSYSGWALCAEGFLL), and 857–879 (LLTIVGALIGSSGAILSYIMCVA). Residues 880 to 1086 (MNRSLANVIL…QAKVRESYQK (207 aa)) lie on the Mitochondrial matrix side of the membrane. NADP(+) is bound by residues Tyr-933, 965–970 (VAGRMP), 1007–1011 (GANDT), 1026–1027 (GM), 1042–1049 (KRSLGVGY), and 1068–1069 (DA). Residue Lys-1079 is modified to N6-succinyllysine.

It in the N-terminal section; belongs to the AlaDH/PNT family. The protein in the C-terminal section; belongs to the PNT beta subunit family. Homodimer. In terms of tissue distribution, widely expressed with expression most readily detectable in adrenal, heart, kidney, thyroid and adipose tissues.

It localises to the mitochondrion inner membrane. It carries out the reaction NAD(+) + NADPH + H(+)(in) = NADH + NADP(+) + H(+)(out). In terms of biological role, the transhydrogenation between NADH and NADP is coupled to respiration and ATP hydrolysis and functions as a proton pump across the membrane. May play a role in reactive oxygen species (ROS) detoxification in the adrenal gland. The chain is NAD(P) transhydrogenase, mitochondrial (NNT) from Homo sapiens (Human).